Consider the following 97-residue polypeptide: Co-chaperonin GroES (97 aa).

This sequence belongs to the GroES chaperonin family. Heptamer of 7 subunits arranged in a ring. Interacts with the chaperonin GroEL.

Its subcellular location is the cytoplasm. Functionally, together with the chaperonin GroEL, plays an essential role in assisting protein folding. The GroEL-GroES system forms a nano-cage that allows encapsulation of the non-native substrate proteins and provides a physical environment optimized to promote and accelerate protein folding. GroES binds to the apical surface of the GroEL ring, thereby capping the opening of the GroEL channel. The polypeptide is Co-chaperonin GroES (Pseudomonas entomophila (strain L48)).